Reading from the N-terminus, the 217-residue chain is Somatotropin (217 aa).

The first 26 residues, 1–26, serve as a signal peptide directing secretion; that stretch reads MAPGSRTSLLLAFGLLCLPWLQEGSA. Position 44 (histidine 44) interacts with Zn(2+). Cysteine 79 and cysteine 191 are joined by a disulfide. The residue at position 132 (serine 132) is a Phosphoserine. Residue glutamate 200 coordinates Zn(2+). A disulfide bond links cysteine 208 and cysteine 215.

It belongs to the somatotropin/prolactin family.

It is found in the secreted. Its function is as follows. Plays an important role in growth control. Its major role in stimulating body growth is to stimulate the liver and other tissues to secrete IGF1. It stimulates both the differentiation and proliferation of myoblasts. It also stimulates amino acid uptake and protein synthesis in muscle and other tissues. In Pan troglodytes (Chimpanzee), this protein is Somatotropin (GH1).